The primary structure comprises 391 residues: Ferrochelatase (391 aa).

Residues histidine 196 and glutamate 281 each contribute to the Fe cation site.

It belongs to the ferrochelatase family.

It is found in the cytoplasm. It catalyses the reaction heme b + 2 H(+) = protoporphyrin IX + Fe(2+). It functions in the pathway porphyrin-containing compound metabolism; protoheme biosynthesis; protoheme from protoporphyrin-IX: step 1/1. In terms of biological role, catalyzes the ferrous insertion into protoporphyrin IX. The protein is Ferrochelatase of Synechococcus sp. (strain WH7803).